Here is a 2211-residue protein sequence, read N- to C-terminus: Norsolorinic acid synthase stcA (2211 aa).

The segment at 11 to 251 (FLFGDQTYDF…REIPIYVPAH (241 aa)) is starter unit:ACP transacylase (SAT) domain. The disordered stretch occupies residues 358–378 (PAEPPTSINKTPERYSHRPGS). Residues 368–378 (TPERYSHRPGS) show a composition bias toward basic and acidic residues. The region spanning 380–812 (RGKLAIVSMS…GGNTAVLVED (433 aa)) is the Ketosynthase family 3 (KS3) domain. Residues Cys-552, His-687, and His-730 each act as for beta-ketoacyl synthase activity in the active site. The segment at 912–1201 (IACSGQGSQY…MAGMIKTTLD (290 aa)) is malonyl-CoA:ACP transacylase (MAT) domain. Ser-1004 (for acyl/malonyl transferase activity) is an active-site residue. A disordered region spans residues 1289–1316 (TATSDYQLPSDEQVAAKRPSKQDESKEA). Residues 1327 to 1468 (HRVVEEKTEP…CTVRFTSEAQ (142 aa)) are N-terminal hotdog fold. One can recognise a PKS/mFAS DH domain in the interval 1327–1643 (HRVVEEKTEP…LRRVPRRGLR (317 aa)). The product template (PT) domain stretch occupies residues 1340–1643 (TLVVETDISR…LRRVPRRGLR (304 aa)). His-1359 acts as the Proton acceptor; for dehydratase activity in catalysis. The interval 1495-1643 (FIRYTTKSGY…LRRVPRRGLR (149 aa)) is C-terminal hotdog fold. Catalysis depends on Asp-1555, which acts as the Proton donor; for dehydratase activity. Positions 1655–1706 (RLHGNQQAVKTQAPQRAALKQKPQSSPTQPHASKVAYSRSATSPTAGKPVVA) are disordered. Polar residues-rich tracts occupy residues 1658 to 1668 (GNQQAVKTQAP) and 1676 to 1685 (KPQSSPTQPH). 2 consecutive Carrier domains span residues 1712–1791 (REGD…SGSA) and 1839–1915 (DELF…GTTS). O-(pantetheine 4'-phosphoryl)serine is present on residues Ser-1749 and Ser-1873. The segment covering 1912–1926 (GTTSGSTTGSSGSGS) has biased composition (low complexity). The tract at residues 1912–1947 (GTTSGSTTGSSGSGSSEDETDSIPSTPEEYTTADTR) is disordered. The segment covering 1934–1945 (IPSTPEEYTTAD) has biased composition (polar residues). The segment at 1969–2205 (ILFMLPDGGG…KEHVYLVREL (237 aa)) is thioesterase/Claisen cyclase (TE/CLC) domain. Catalysis depends on Ser-2039, which acts as the For thioesterase activity.

Pantetheine 4'-phosphate is required as a cofactor.

It catalyses the reaction hexanoyl-[ACP] + 7 malonyl-CoA + 6 H(+) = noranthrone + holo-[ACP] + 7 CO2 + 7 CoA + 2 H2O. The protein operates within mycotoxin biosynthesis; sterigmatocystin biosynthesis. Non-reducing polyketide synthase; part of the gene cluster that mediates the biosynthesis of sterigmatocystin (ST), a polyketide-derived furanocoumarin which is part of the most toxic and carcinogenic compounds among the known mycotoxins. The first step in the biosynthesis of sterigmatocystin is the production of hexanoate by the fatty acid synthase (FAS) units stcJ and stcK. The polyketide backbone is assembled by the non-reducing polyketide synthase stcA by condensation of the starter hexanoyl-CoA and 7 malonyl-CoA extender units followed by cyclization and release of norsolorinic acid. Norsolorinic acid is the first stable intermediate in the biosynthesis of sterigmatocystin and is converted into averantin (AVN) by the ketoreductase stcE which reduces the hexanoate ketone to an alcohol. Averantin is then oxidized into 5'-hydroxyaverantin (HAVN) by the cytochrome P450 monooxygenase stcF. 5'-hydroxyaverantin is further converted to 5'-oxyaverantin (OAVN) by the 5'-hydroxyaverantin dehydrogenase stcG. The next step is the conversion of OAVN into averufin (AVF) which is catalyzed by a yet to be identified enzyme. The cytochrome P450 monooxygenase stcB and the flavin-binding monooxygenase stcW are both required for the conversion of averufin to 1-hydroxyversicolorone. The esterase stcI probably catalyzes the formation of versiconal hemiacetal acetate from 1-hydroxyversicolorone. The oxydoreductase stcN then probably catalyzes the biosynthetic step from versiconal to versicolorin B (VERB). The next step is performed by the versicolorin B desaturase stcL to produce versicolorin A (VERA). The ketoreductase stcU and the cytochrome P450 monooxygenase stcS are involved in the conversion of versicolorin A to demethylsterigmatocystin. The Baeyer-Villiger oxidas stcQ and the reductase stcR might be involved in the biosynthetic step from versicolorin A to demethylsterigmatocystin. The final step in the biosynthesis of sterigmatocystin is the methylation of demethylsterigmatocystin catalyzed by the methyltransferase stcP. This Emericella nidulans (strain FGSC A4 / ATCC 38163 / CBS 112.46 / NRRL 194 / M139) (Aspergillus nidulans) protein is Norsolorinic acid synthase stcA.